The primary structure comprises 537 residues: Zinc finger protein 703 (537 aa).

Disordered regions lie at residues 1 to 38, 90 to 254, and 300 to 323; these read MNCSPPGSSTDTERQSSSSGTPVAPRPTLAPTHPLRQA, SQIG…VAPV, and VGNQLPGTLGLPGKPPSSSPLTGA. Positions 101–111 are enriched in polar residues; that stretch reads SKLNSVTSSGL. Residues 149–158 are compositionally biased toward low complexity; that stretch reads GSSSGGAADK. Residues 176 to 185 show a composition bias toward polar residues; that stretch reads SPSSRVSSPG. The segment covering 188–203 has biased composition (basic and acidic residues); that stretch reads CDSKNNESQEKKEPEA. Polar residues predominate over residues 205–220; it reads KANSETSQVNPTLTRA. A compositionally biased stretch (low complexity) spans 221 to 232; it reads STSNSSAESSQS. Residues 409-437 form a C2H2-type zinc finger; it reads HICNWVSASGPCDKRFSTSEELLAHLRTH.

It belongs to the Elbow/Noc family.

Its subcellular location is the nucleus. The protein localises to the cytoplasm. Its function is as follows. Transcriptional corepressor which does not bind directly to DNA and may regulate transcription through recruitment of histone deacetylases to gene promoters. Regulates cell adhesion, migration and proliferation. Involved in specification of the lateral neural plate border (NPB). May be required for segmental gene expression during hindbrain development. This Xenopus tropicalis (Western clawed frog) protein is Zinc finger protein 703 (znf703).